The following is a 198-amino-acid chain: Protein C4 (198 aa).

The interval 1–36 (MFNPRHPGGEFFGRKHHRRHAPDGRSSSSSSSSSEC) is disordered.

The chain is Protein C4 (C4) from Giardia intestinalis (Giardia lamblia).